A 2280-amino-acid polypeptide reads, in one-letter code: Acetyl-CoA carboxylase (2280 aa).

The Biotin carboxylation domain maps to 68–577; sequence VITSILIANN…TTGWLDRLIA (510 aa). An ATP-grasp domain is found at 226-418; the sequence is ETNIVTVDDD…LPAAQLQVAM (193 aa). ATP is bound at residue 266-271; that stretch reads GGGGKG. Mn(2+) contacts are provided by Glu375, Glu389, and Asn391. Arg393 is a catalytic residue. The region spanning 704-778 is the Biotinyl-binding domain; it reads LEQENDPTQL…DAGDILGILT (75 aa). Position 745 is an N6-biotinyllysine (Lys745). Phosphoserine occurs at positions 1179 and 1181. In terms of domain architecture, CoA carboxyltransferase N-terminal spans 1524-1863; that stretch reads PYPTKEWLQP…KRNNPVPISP (340 aa). A carboxyltransferase region spans residues 1524 to 2181; that stretch reads PYPTKEWLQP…EHYALQKITQ (658 aa). The CoA site is built by Arg1772, Lys2074, and Arg2076. A CoA carboxyltransferase C-terminal domain is found at 1867 to 2181; it reads TWDRDVEFYP…EHYALQKITQ (315 aa).

Interacts with sad1. It depends on biotin as a cofactor. Mn(2+) is required as a cofactor.

It localises to the cytoplasm. It catalyses the reaction hydrogencarbonate + acetyl-CoA + ATP = malonyl-CoA + ADP + phosphate + H(+). It carries out the reaction N(6)-biotinyl-L-lysyl-[protein] + hydrogencarbonate + ATP = N(6)-carboxybiotinyl-L-lysyl-[protein] + ADP + phosphate + H(+). It participates in lipid metabolism; malonyl-CoA biosynthesis; malonyl-CoA from acetyl-CoA: step 1/1. Its activity is regulated as follows. By phosphorylation. Carries out three functions: biotin carboxyl carrier protein, biotin carboxylase and carboxyltransferase. The chain is Acetyl-CoA carboxylase (cut6) from Schizosaccharomyces pombe (strain 972 / ATCC 24843) (Fission yeast).